Reading from the N-terminus, the 208-residue chain is Uracil phosphoribosyltransferase (208 aa).

5-phospho-alpha-D-ribose 1-diphosphate is bound by residues Arg-78, Arg-103, and 130 to 138 (DPMLATGGS). Uracil contacts are provided by residues Ile-193 and 198–200 (GDA). Position 199 (Asp-199) interacts with 5-phospho-alpha-D-ribose 1-diphosphate.

It belongs to the UPRTase family. Mg(2+) is required as a cofactor.

It catalyses the reaction UMP + diphosphate = 5-phospho-alpha-D-ribose 1-diphosphate + uracil. It functions in the pathway pyrimidine metabolism; UMP biosynthesis via salvage pathway; UMP from uracil: step 1/1. Its activity is regulated as follows. Allosterically activated by GTP. Catalyzes the conversion of uracil and 5-phospho-alpha-D-ribose 1-diphosphate (PRPP) to UMP and diphosphate. The sequence is that of Uracil phosphoribosyltransferase from Shewanella putrefaciens (strain CN-32 / ATCC BAA-453).